The sequence spans 315 residues: Ribosomal RNA small subunit methyltransferase H (315 aa).

S-adenosyl-L-methionine-binding positions include 37–39, Asp-57, Asp-105, and Gln-112; that span reads GGH.

Belongs to the methyltransferase superfamily. RsmH family.

The protein localises to the cytoplasm. The catalysed reaction is cytidine(1402) in 16S rRNA + S-adenosyl-L-methionine = N(4)-methylcytidine(1402) in 16S rRNA + S-adenosyl-L-homocysteine + H(+). Its function is as follows. Specifically methylates the N4 position of cytidine in position 1402 (C1402) of 16S rRNA. This is Ribosomal RNA small subunit methyltransferase H from Nitrosococcus oceani (strain ATCC 19707 / BCRC 17464 / JCM 30415 / NCIMB 11848 / C-107).